A 484-amino-acid polypeptide reads, in one-letter code: Calcium uniporter protein, mitochondrial (484 aa).

Residues 1 to 33 constitute a mitochondrion transit peptide; sequence MGHVLGGTLLAANRLARPPAVVLGKPRVCCWRA. Residues 34 to 304 lie on the Mitochondrial matrix side of the membrane; the sequence is SPWPVIVSSA…CDLLAHKGAH (271 aa). Disordered stretches follow at residues 59–104 and 188–227; these read ARYE…KGRL and YTGG…DTHW. Basic and acidic residues predominate over residues 61 to 82; sequence YEARGRSTTQRKVDDRPWHRES. Residues 83–93 are compositionally biased toward polar residues; it reads SGSLPKSTSPD. A helical membrane pass occupies residues 305 to 326; sequence ALAKGGFAALAAWWGIVYYVTF. Topologically, residues 327–334 are mitochondrial intermembrane; sequence HTDMGWDL. Residues 332–340 carry the Selectivity filter motif; it reads WDLVEPITY. The chain crosses the membrane as a helical span at residues 335–355; the sequence is VEPITYLAGLASIMGGYLWFL. Residue glutamate 336 coordinates Ca(2+). Over 356–484 the chain is Mitochondrial matrix; the sequence is FISRDLSYKA…NEAAANVPGD (129 aa). 2 stretches are compositionally biased toward basic and acidic residues: residues 426-435 and 452-462; these read KEVLEEEKGG and DHDHDHDHVSH. The interval 426 to 484 is disordered; the sequence is KEVLEEEKGGKARKREQEDEDGDGDDDHDHDHDHVSHGAELQGQDILHANEAAANVPGD.

The protein belongs to the MCU (TC 1.A.77) family. In terms of assembly, homotetramer, assembles in a dimer or dimers configuration with two interfaces.

It is found in the mitochondrion inner membrane. It catalyses the reaction Ca(2+)(in) = Ca(2+)(out). Its activity is regulated as follows. Inhibited by ruthenium red or its derivative Ru360. Its function is as follows. Highly selective calcium channel localized to the inner mitochondrial membrane, which mediates calcium uptake into the mitochondrial matrix. Mitochondrial calcium homeostasis plays key roles in cellular physiology and regulates ATP production, cytoplasmic calcium signals and activation of cell death pathways. Sufficient to operate as a pore-forming channel without the need of calcium-sensor or auxiliary subunit. In Metarhizium acridum (strain CQMa 102), this protein is Calcium uniporter protein, mitochondrial.